The primary structure comprises 116 residues: MRHGCRVPELGRPADQRKALLRALTTQLIRHGQVKTTKARAKAVRSEVDRMITLAKDGSLAARRRALGYMYDKDLVHALFAQAKDRYGDRQGGYSRVVRTVRRRGDNAEMAIIELV.

It belongs to the bacterial ribosomal protein bL17 family. Part of the 50S ribosomal subunit. Contacts protein L32.

The polypeptide is Large ribosomal subunit protein bL17 (Picosynechococcus sp. (strain ATCC 27264 / PCC 7002 / PR-6) (Agmenellum quadruplicatum)).